Reading from the N-terminus, the 753-residue chain is MTILNHTLGFPRVGLRRELKKAQESYWAGNSTREELLAVGRELRARHWEQQKQAGIDLLPVGDFAWYDHVLTTSLLLGNVPARHQNNDGSVDIDTLFRIGRGRAPTGEPAAAAEMTKWFNTNYHYMVPEFVKGQQFKLTWTQLLEEVDEALALGHKVKPVLLGPVTYLWLGKVKGEQFDRLSLLNDILPVYQQVLAELAKRGIEWVQIDEPALVLELPQAWLDAYKPAYDALQGQVKLLLTTYFEGVTPNLDTITALPVQGLHVDLVHGKDDVAELHKRLPSDWLLSAGLINGRNVWRADLTEKYAQIKDIVGKRDLWVASSCSLLHSPIDLSVETRLDAEVKSWFAFALQKCHELALLRDALNSGDTAALAAWSAPIQARRHSTRVHNPAVEKRLAAITAQDSQRANVYEVRAEAQRARFKLPAWPTTTIGSFPQTTEIRTLRLDFKKGNLDANNYRTGIAEHIKQAIVEQERLGLDVLVHGEAERNDMVEYFGEHLDGFVFTQNGWVQSYGSRCVKPPIVIGDVSRPAPITVEWAKYAQSLTDKPVKGMLTGPVTILCWSFPREDVSRETIAKQIALALRDEVADLEAAGIGIIQIDEPALREGLPLRRSDWDAYLQWGVEAFRINAAVAKDDTQIHTHMCYCEFNDIMDSIAALDADVITIETSRSDMELLESFEEFDYPNEIGPGVYDIHSPNVPSVEWIEALLKKAAKRIPAERLWVNPDCGLKTRGWPETRAALANMVQAAQNLRRG.

5-methyltetrahydropteroyltri-L-glutamate contacts are provided by residues 17–20 (RELK) and K117. Residues 431-433 (IGS) and E484 each bind L-homocysteine. L-methionine-binding positions include 431 to 433 (IGS) and E484. 5-methyltetrahydropteroyltri-L-glutamate is bound by residues 515–516 (RC) and W561. D599 is a binding site for L-homocysteine. An L-methionine-binding site is contributed by D599. Residue E605 coordinates 5-methyltetrahydropteroyltri-L-glutamate. Zn(2+) contacts are provided by H641, C643, and E665. Catalysis depends on H694, which acts as the Proton donor. C726 serves as a coordination point for Zn(2+).

Belongs to the vitamin-B12 independent methionine synthase family. It depends on Zn(2+) as a cofactor.

The catalysed reaction is 5-methyltetrahydropteroyltri-L-glutamate + L-homocysteine = tetrahydropteroyltri-L-glutamate + L-methionine. The protein operates within amino-acid biosynthesis; L-methionine biosynthesis via de novo pathway; L-methionine from L-homocysteine (MetE route): step 1/1. Catalyzes the transfer of a methyl group from 5-methyltetrahydrofolate to homocysteine resulting in methionine formation. The protein is 5-methyltetrahydropteroyltriglutamate--homocysteine methyltransferase of Escherichia coli (strain SMS-3-5 / SECEC).